The following is a 354-amino-acid chain: Probable L-ascorbate-6-phosphate lactonase UlaG (354 aa).

It belongs to the UlaG family. A divalent metal cation is required as a cofactor.

The protein resides in the cytoplasm. The catalysed reaction is L-ascorbate 6-phosphate + H2O = 3-dehydro-L-gulonate 6-phosphate. The protein operates within cofactor degradation; L-ascorbate degradation; D-xylulose 5-phosphate from L-ascorbate: step 1/4. In terms of biological role, probably catalyzes the hydrolysis of L-ascorbate-6-P into 3-keto-L-gulonate-6-P. Is essential for L-ascorbate utilization under anaerobic conditions. The chain is Probable L-ascorbate-6-phosphate lactonase UlaG from Salmonella choleraesuis (strain SC-B67).